The chain runs to 438 residues: Glycogen synthase (438 aa).

Lysine 16 contacts ADP-alpha-D-glucose.

This sequence belongs to the glycosyltransferase 1 family. Bacterial/plant glycogen synthase subfamily.

It carries out the reaction [(1-&gt;4)-alpha-D-glucosyl](n) + ADP-alpha-D-glucose = [(1-&gt;4)-alpha-D-glucosyl](n+1) + ADP + H(+). It functions in the pathway glycan biosynthesis; glycogen biosynthesis. In terms of biological role, synthesizes alpha-1,4-glucan chains using ADP-glucose. This is Glycogen synthase from Thermus caldophilus.